The sequence spans 449 residues: Aminopeptidase C (449 aa).

Catalysis depends on residues Cys-70, His-364, and Asn-385.

This sequence belongs to the peptidase C1 family. In terms of assembly, homohexamer.

It is found in the cytoplasm. It carries out the reaction Inactivates bleomycin B2 (a cytotoxic glycometallopeptide) by hydrolysis of a carboxyamide bond of beta-aminoalanine, but also shows general aminopeptidase activity. The specificity varies somewhat with source, but amino acid arylamides of Met, Leu and Ala are preferred.. This chain is Aminopeptidase C (pepC), found in Lactobacillus helveticus (Lactobacillus suntoryeus).